The chain runs to 148 residues: uncharacterized protein (148 aa).

A signal peptide spans 1–35 (MRCVTRTRNWWRRAARMPRAGSSAWWVAVCKQVCT).

It localises to the secreted. This is an uncharacterized protein from Homo sapiens (Human).